Consider the following 1069-residue polypeptide: Structural polyprotein (1069 aa).

Asp-28 contributes to the a divalent metal cation binding site. Residues Thr-504–Thr-534 are disordered. A compositionally biased stretch (basic and acidic residues) spans Thr-512 to Thr-534. Positions Ala-558–Ala-791 constitute a Peptidase S50 domain. Ser-692 acts as the Nucleophile in catalysis. The active site involves Lys-729. Disordered regions lie at residues Leu-876 to Met-900 and Ser-1031 to Ser-1069.

As to quaternary structure, homotrimer. A central divalent metal stabilizes the VP2 trimer. Homodimer. Interacts (via C-terminus) with VP1 in the cytoplasm. Interacts with VP2. Specific enzymatic cleavages yield mature proteins. The capsid assembly seems to be regulated by polyprotein processing. The protease VP4 cleaves itself off the polyprotein, thus releasing pre-VP2 and VP3 within the infected cell. During capsid assembly, the C-terminus of pre-VP2 is further processed by VP4, giving rise to VP2, the external capsid protein and three small peptides that all stay closely associated with the capsid. In terms of processing, the N-termini of VP2 and VP3 are blocked.

It is found in the virion. Its subcellular location is the host cytoplasm. Functionally, capsid protein VP2 self assembles to form an icosahedral capsid with a T=13 symmetry, about 70 nm in diameter, and consisting of 260 VP2 trimers. The capsid encapsulates the genomic dsRNA. VP2 is also involved in attachment and entry into the host cell. In terms of biological role, the precursor of VP2 plays an important role in capsid assembly. First, pre-VP2 and VP2 oligomers assemble to form a procapsid. Then, the pre-VP2 intermediates may be processed into VP2 proteins by proteolytic cleavage mediated by VP4 to obtain the mature virion. The final capsid is composed of pentamers and hexamers but VP2 has a natural tendency to assemble into all-pentameric structures. Therefore pre-VP2 may be required to allow formation of the hexameric structures. Protease VP4 is a serine protease that cleaves the polyprotein into its final products. Pre-VP2 is first partially cleaved, and may be completely processed by VP4 upon capsid maturation. Its function is as follows. Capsid protein VP3 plays a key role in virion assembly by providing a scaffold for the capsid made of VP2. May self-assemble to form a T=4-like icosahedral inner-capsid composed of at least 180 trimers. Plays a role in genomic RNA packaging by recruiting VP1 into the capsid and interacting with the dsRNA genome segments to form a ribonucleoprotein complex. Additionally, the interaction of the VP3 C-terminal tail with VP1 removes the inherent structural blockade of the polymerase active site. Thus, VP3 can also function as a transcriptional activator. Functionally, structural peptide 1 is a small peptide derived from pre-VP2 C-terminus. It destabilizes and perforates cell membranes, suggesting a role during entry. In terms of biological role, structural peptide 2 is a small peptide derived from pre-VP2 C-terminus. It is not essential for the virus viability, but viral growth is affected when missing. Structural peptide 3 is a small peptide derived from pre-VP2 C-terminus. It is not essential for the virus viability, but viral growth is affected when missing. Its function is as follows. Structural peptide 4 is a small peptide derived from pre-VP2 C-terminus. It is essential for the virus viability. In Channa lucius (Forest snakehead), this protein is Structural polyprotein.